A 979-amino-acid chain; its full sequence is Probable serine/threonine-protein kinase iksA (979 aa).

N-linked (GlcNAc...) asparagine glycans are attached at residues Asn32, Asn110, Asn120, Asn121, Asn147, Asn155, Asn161, Asn220, Asn231, and Asn243. A disordered region spans residues 207–245 (SKSGVNNNNNNNNNDSTTTNNNNNNNTTPPQQQQQQNSS). Residues 212 to 244 (NNNNNNNNNDSTTTNNNNNNNTTPPQQQQQQNS) show a composition bias toward low complexity. The 308-residue stretch at 261 to 568 (FKEDIKIGSG…ISQILSTHFI (308 aa)) folds into the Protein kinase domain. Residues 267 to 275 (IGSGGFGSV) and Lys293 contribute to the ATP site. The active-site Proton acceptor is Asp397. N-linked (GlcNAc...) asparagine glycosylation is found at Asn592, Asn597, Asn615, Asn645, Asn646, Asn663, and Asn699. The span at 593 to 602 (TSVHNTTAST) shows a compositional bias: polar residues. Residues 593–666 (TSVHNTTAST…LGNNNNNNTN (74 aa)) are disordered. Positions 610 to 666 (SISTTNSTTSSSSSTATSSSLSSTTIATTSSSNAINNTTATTTTNSNLGNNNNNNTN) are enriched in low complexity. Residues 713 to 727 (NDDIIIDDDDDDDDS) are compositionally biased toward acidic residues. The disordered stretch occupies residues 713-793 (NDDIIIDDDD…GNNGIRKALP (81 aa)). Low complexity-rich tracts occupy residues 728-737 (TNNNDTNNTD) and 753-773 (NNKK…SSNK). N-linked (GlcNAc...) asparagine glycans are attached at residues Asn731 and Asn734. Residues 846-866 (FPSPILLYPLLLLSLIPILVV) form a helical membrane-spanning segment. Residues Asn870 and Asn894 are each glycosylated (N-linked (GlcNAc...) asparagine). 2 consecutive transmembrane segments (helical) span residues 912–932 (INTI…VLLP) and 956–976 (FPLL…IFIF).

It belongs to the protein kinase superfamily. Ser/Thr protein kinase family.

The protein localises to the membrane. The enzyme catalyses L-seryl-[protein] + ATP = O-phospho-L-seryl-[protein] + ADP + H(+). It carries out the reaction L-threonyl-[protein] + ATP = O-phospho-L-threonyl-[protein] + ADP + H(+). The polypeptide is Probable serine/threonine-protein kinase iksA (iksA) (Dictyostelium discoideum (Social amoeba)).